We begin with the raw amino-acid sequence, 333 residues long: Phospholipid phosphatase-related protein type 1 (333 aa).

The next 3 helical transmembrane spans lie at Ile12–Tyr32, Phe66–Val86, and Phe126–Val146. N-linked (GlcNAc...) asparagine glycosylation is present at Asn162. Transmembrane regions (helical) follow at residues Ala200–Thr217, Ser223–Leu243, and Val256–Asn276.

It belongs to the PA-phosphatase related phosphoesterase family.

It is found in the cell membrane. It localises to the cell projection. The protein resides in the neuron projection. Functionally, may play a role in neurite outgrowth and neurogenesis. In Danio rerio (Zebrafish), this protein is Phospholipid phosphatase-related protein type 1 (plppr1).